A 315-amino-acid polypeptide reads, in one-letter code: 4-hydroxy-3-methylbut-2-enyl diphosphate reductase (315 aa).

C12 provides a ligand contact to [4Fe-4S] cluster. 2 residues coordinate (2E)-4-hydroxy-3-methylbut-2-enyl diphosphate: H43 and H81. Dimethylallyl diphosphate-binding residues include H43 and H81. Isopentenyl diphosphate contacts are provided by H43 and H81. C103 is a binding site for [4Fe-4S] cluster. H131 contacts (2E)-4-hydroxy-3-methylbut-2-enyl diphosphate. Dimethylallyl diphosphate is bound at residue H131. H131 provides a ligand contact to isopentenyl diphosphate. The active-site Proton donor is the E133. T170 serves as a coordination point for (2E)-4-hydroxy-3-methylbut-2-enyl diphosphate. C198 provides a ligand contact to [4Fe-4S] cluster. (2E)-4-hydroxy-3-methylbut-2-enyl diphosphate is bound by residues S226, N228, and S271. S226, N228, and S271 together coordinate dimethylallyl diphosphate. S226, N228, and S271 together coordinate isopentenyl diphosphate.

The protein belongs to the IspH family. The cofactor is [4Fe-4S] cluster.

It carries out the reaction isopentenyl diphosphate + 2 oxidized [2Fe-2S]-[ferredoxin] + H2O = (2E)-4-hydroxy-3-methylbut-2-enyl diphosphate + 2 reduced [2Fe-2S]-[ferredoxin] + 2 H(+). The catalysed reaction is dimethylallyl diphosphate + 2 oxidized [2Fe-2S]-[ferredoxin] + H2O = (2E)-4-hydroxy-3-methylbut-2-enyl diphosphate + 2 reduced [2Fe-2S]-[ferredoxin] + 2 H(+). The protein operates within isoprenoid biosynthesis; dimethylallyl diphosphate biosynthesis; dimethylallyl diphosphate from (2E)-4-hydroxy-3-methylbutenyl diphosphate: step 1/1. It participates in isoprenoid biosynthesis; isopentenyl diphosphate biosynthesis via DXP pathway; isopentenyl diphosphate from 1-deoxy-D-xylulose 5-phosphate: step 6/6. Functionally, catalyzes the conversion of 1-hydroxy-2-methyl-2-(E)-butenyl 4-diphosphate (HMBPP) into a mixture of isopentenyl diphosphate (IPP) and dimethylallyl diphosphate (DMAPP). Acts in the terminal step of the DOXP/MEP pathway for isoprenoid precursor biosynthesis. This is 4-hydroxy-3-methylbut-2-enyl diphosphate reductase from Geobacillus sp. (strain WCH70).